We begin with the raw amino-acid sequence, 229 residues long: LexA repressor (229 aa).

The H-T-H motif DNA-binding region spans 26–46 (FDEMKEALDLASKSGIHRLIT). Catalysis depends on for autocatalytic cleavage activity residues Ser-149 and Lys-187.

The protein belongs to the peptidase S24 family. Homodimer.

It carries out the reaction Hydrolysis of Ala-|-Gly bond in repressor LexA.. Its function is as follows. Represses a number of genes involved in the response to DNA damage (SOS response), including recA and lexA. In the presence of single-stranded DNA, RecA interacts with LexA causing an autocatalytic cleavage which disrupts the DNA-binding part of LexA, leading to derepression of the SOS regulon and eventually DNA repair. This is LexA repressor from Phenylobacterium zucineum (strain HLK1).